A 426-amino-acid chain; its full sequence is Histidine--tRNA ligase (426 aa).

It belongs to the class-II aminoacyl-tRNA synthetase family.

Its subcellular location is the cytoplasm. The enzyme catalyses tRNA(His) + L-histidine + ATP = L-histidyl-tRNA(His) + AMP + diphosphate + H(+). This is Histidine--tRNA ligase from Saccharolobus islandicus (strain M.16.27) (Sulfolobus islandicus).